The primary structure comprises 483 residues: Altronate oxidoreductase (483 aa).

18–29 (IIQFGEGNFLRA) is a binding site for NAD(+).

It belongs to the mannitol dehydrogenase family. UxaB subfamily.

The enzyme catalyses D-altronate + NAD(+) = keto-D-tagaturonate + NADH + H(+). Its pathway is carbohydrate metabolism; pentose and glucuronate interconversion. The protein is Altronate oxidoreductase of Escherichia coli (strain 55989 / EAEC).